The chain runs to 156 residues: 6,7-dimethyl-8-ribityllumazine synthase (156 aa).

5-amino-6-(D-ribitylamino)uracil-binding positions include F23, 57–59, and 81–83; these read SWE and AVV. 86–87 provides a ligand contact to (2S)-2-hydroxy-3-oxobutyl phosphate; that stretch reads ET. H89 functions as the Proton donor in the catalytic mechanism. Position 114 (F114) interacts with 5-amino-6-(D-ribitylamino)uracil. R128 is a (2S)-2-hydroxy-3-oxobutyl phosphate binding site.

Belongs to the DMRL synthase family.

It carries out the reaction (2S)-2-hydroxy-3-oxobutyl phosphate + 5-amino-6-(D-ribitylamino)uracil = 6,7-dimethyl-8-(1-D-ribityl)lumazine + phosphate + 2 H2O + H(+). The protein operates within cofactor biosynthesis; riboflavin biosynthesis; riboflavin from 2-hydroxy-3-oxobutyl phosphate and 5-amino-6-(D-ribitylamino)uracil: step 1/2. Its function is as follows. Catalyzes the formation of 6,7-dimethyl-8-ribityllumazine by condensation of 5-amino-6-(D-ribitylamino)uracil with 3,4-dihydroxy-2-butanone 4-phosphate. This is the penultimate step in the biosynthesis of riboflavin. The protein is 6,7-dimethyl-8-ribityllumazine synthase of Salinibacter ruber (strain DSM 13855 / M31).